A 378-amino-acid chain; its full sequence is Cobalt-precorrin-5B C(1)-methyltransferase (378 aa).

This sequence belongs to the CbiD family.

The catalysed reaction is Co-precorrin-5B + S-adenosyl-L-methionine = Co-precorrin-6A + S-adenosyl-L-homocysteine. It participates in cofactor biosynthesis; adenosylcobalamin biosynthesis; cob(II)yrinate a,c-diamide from sirohydrochlorin (anaerobic route): step 6/10. Catalyzes the methylation of C-1 in cobalt-precorrin-5B to form cobalt-precorrin-6A. The polypeptide is Cobalt-precorrin-5B C(1)-methyltransferase (Thermoplasma volcanium (strain ATCC 51530 / DSM 4299 / JCM 9571 / NBRC 15438 / GSS1)).